A 427-amino-acid chain; its full sequence is Peptidase B (427 aa).

2 residues coordinate Mn(2+): Lys-195 and Asp-200. Residue Lys-207 is part of the active site. The Mn(2+) site is built by Asp-218, Asp-277, and Glu-279. Residue Arg-281 is part of the active site.

It belongs to the peptidase M17 family. Homohexamer. It depends on Mn(2+) as a cofactor.

The protein resides in the cytoplasm. It catalyses the reaction Release of an N-terminal amino acid, Xaa, from a peptide or arylamide. Xaa is preferably Glu or Asp but may be other amino acids, including Leu, Met, His, Cys and Gln.. Its function is as follows. Probably plays an important role in intracellular peptide degradation. The protein is Peptidase B of Salmonella choleraesuis (strain SC-B67).